Here is a 342-residue protein sequence, read N- to C-terminus: UDP-xylose transporter 1 (342 aa).

Transmembrane regions (helical) follow at residues Met7–Ile27, Leu36–Leu56, Val75–Phe95, Phe100–Leu120, Leu132–Val152, Ser154–Ile174, Gln184–Val204, Ile221–Phe241, Val250–Leu270, and Ile280–Ala300. Residues Gln305–Val342 are disordered. Positions Asn327 to Val342 are enriched in basic and acidic residues.

Belongs to the TPT transporter family. TPT (TC 2.A.7.9) subfamily. As to expression, ubiquitous.

It is found in the golgi apparatus membrane. It localises to the endoplasmic reticulum membrane. Nucleotide-sugar transporter that transports UDP-xylose and UMP in a strict counter-exchange mode. This is UDP-xylose transporter 1 from Arabidopsis thaliana (Mouse-ear cress).